Reading from the N-terminus, the 266-residue chain is Luciferase (266 aa).

A helical transmembrane segment spans residues 22-41 (GLAVTCCAVAVASIIAFPYI).

Belongs to the fungal luciferase family.

It is found in the membrane. The enzyme catalyses 3-hydroxyhispidin + O2 = (E)-caffeoylpyruvate + hnu + CO2. The catalysed reaction is 3-hydroxyhispidin + O2 = 4-[(E)-2-(3,4-dihydroxyphenyl)ethenyl]-1,7-dihydroxy-2,3,5-trioxabicyclo[2.2.2]oct-7-en-6-one. Luciferase; part of the gene cluster that mediates the fungal bioluminescence cycle. Uses the fungal luciferin 3-hydroxyhispidin as a substrate to produce an endoperoxide as a high-energy intermediate with decomposition that yields oxyluciferin (also known as caffeoylpyruvate) and light emission. The fungal bioluminescence cycle begins with the hispidin synthetase that catalyzes the formation of hispidin which is further hydroxylated by the hispidin-3-hydroxylase, yielding the fungal luciferin 3-hydroxyhispidin. The luciferase then produces an endoperoxide as a high-energy intermediate with decomposition that yields oxyluciferin and light emission. Oxyluciferin can be recycled to caffeic acid by caffeoylpyruvate hydrolase. The protein is Luciferase of Armillaria mellea (Honey mushroom).